The chain runs to 288 residues: Energy-coupling factor transporter ATP-binding protein EcfA3 (288 aa).

The ABC transporter domain maps to Ile-3–Arg-245. ATP is bound at residue Gly-40 to Ser-47.

It belongs to the ABC transporter superfamily. Energy-coupling factor EcfA family. As to quaternary structure, forms a stable energy-coupling factor (ECF) transporter complex composed of 2 membrane-embedded substrate-binding proteins (S component), 2 ATP-binding proteins (A component) and 2 transmembrane proteins (T component).

It localises to the cell membrane. In terms of biological role, ATP-binding (A) component of a common energy-coupling factor (ECF) ABC-transporter complex. Unlike classic ABC transporters this ECF transporter provides the energy necessary to transport a number of different substrates. The chain is Energy-coupling factor transporter ATP-binding protein EcfA3 from Oenococcus oeni (strain ATCC BAA-331 / PSU-1).